A 329-amino-acid polypeptide reads, in one-letter code: Beta-ketoacyl-[acyl-carrier-protein] synthase III (329 aa).

Catalysis depends on residues Cys-123 and His-256. The interval 257-261 (QANVR) is ACP-binding. Residue Asn-286 is part of the active site.

This sequence belongs to the thiolase-like superfamily. FabH family. In terms of assembly, homodimer.

It localises to the cytoplasm. It carries out the reaction malonyl-[ACP] + acetyl-CoA + H(+) = 3-oxobutanoyl-[ACP] + CO2 + CoA. The protein operates within lipid metabolism; fatty acid biosynthesis. Catalyzes the condensation reaction of fatty acid synthesis by the addition to an acyl acceptor of two carbons from malonyl-ACP. Catalyzes the first condensation reaction which initiates fatty acid synthesis and may therefore play a role in governing the total rate of fatty acid production. Possesses both acetoacetyl-ACP synthase and acetyl transacylase activities. Its substrate specificity determines the biosynthesis of branched-chain and/or straight-chain of fatty acids. The protein is Beta-ketoacyl-[acyl-carrier-protein] synthase III of Bordetella parapertussis (strain 12822 / ATCC BAA-587 / NCTC 13253).